A 250-amino-acid polypeptide reads, in one-letter code: Developmental protein SEPALLATA 2 (250 aa).

The 55-residue stretch at 3–57 (RGRVELKRIENKINRQVTFAKRRNGLLKKAYELSVLCDAEVSLIVFSNRGKLYEF) folds into the MADS-box domain. Residues 85–150 (AKELENSYRE…CIKTQYMLDQ (66 aa)) adopt a coiled-coil conformation. The 91-residue stretch at 88-178 (LENSYREYLK…SMKLEDMIGV (91 aa)) folds into the K-box domain.

In terms of assembly, heterodimer with AGAMOUS capable of binding to CArG-box sequences. Interacts with TT16/AGL32.

The protein localises to the nucleus. Functionally, probable transcription factor. Functions with SEPALLATA1/AGL2 and SEPALLATA3/AGL9 to ensure proper development of petals, stamens and carpels and to prevent the indeterminate growth of the flower meristem. Forms a heterodimer via the K-box domain with AG, that could be involved in genes regulation during floral meristem development. The polypeptide is Developmental protein SEPALLATA 2 (SEP2) (Arabidopsis thaliana (Mouse-ear cress)).